Reading from the N-terminus, the 1406-residue chain is Receptor-type tyrosine-protein phosphatase eta (1406 aa).

A signal peptide spans 1–24 (MRRLPLLPPCPLLLLLLLPAEVRC). Over 25–1044 (TTACTDDCSL…LPQDPGVIAG (1020 aa)) the chain is Extracellular. 36 N-linked (GlcNAc...) asparagine glycosylation sites follow: Asn-36, Asn-52, Asn-97, Asn-103, Asn-118, Asn-124, Asn-186, Asn-192, Asn-243, Asn-275, Asn-281, Asn-296, Asn-302, Asn-331, Asn-332, Asn-364, Asn-385, Asn-391, Asn-453, Asn-459, Asn-484, Asn-500, Asn-510, Asn-547, Asn-568, Asn-630, Asn-636, Asn-651, Asn-657, Asn-719, Asn-745, Asn-750, Asn-766, Asn-776, Asn-804, and Asn-828. A disordered region spans residues 39-72 (EEMGTSSNDELSVNATSGNRRLSEDVSLPGRAMS). The span at 41–58 (MGTSSNDELSVNATSGNR) shows a compositional bias: polar residues. Fibronectin type-III domains are found at residues 82-170 (AVLD…TKPS), 171-259 (PVLD…TKPS), 260-343 (PVLD…SLNL), 346-437 (KPSP…TKPS), 438-523 (PVLD…SLYT), 524-614 (KPTP…TKPR), 615-703 (AVLH…TKPS), 704-793 (MVLN…VPSS), 794-888 (VNAF…TDPP), and 887-979 (PPVP…IVDV). N-linked (GlcNAc...) asparagine glycosylation is present at Asn-1010. The chain crosses the membrane as a helical span at residues 1045–1065 (AVIGCLLAILAVVAIGGYIFW). Residues 1066 to 1406 (RRRRKDKRNT…AFGKANGYHA (341 aa)) are Cytoplasmic-facing. One can recognise a Tyrosine-protein phosphatase domain in the interval 1110-1367 (FAEEYEELKS…VFLNQCVMDI (258 aa)). Residues Asp-1274, 1308-1314 (CSAGVGR), and Gln-1352 each bind substrate. Cys-1308 serves as the catalytic Phosphocysteine intermediate.

Belongs to the protein-tyrosine phosphatase family. Receptor class 3 subfamily. As to expression, found on the apical surfaces of retinal Mueller cells, renal tubule cells and intestinal brush border cells.

It is found in the cell membrane. It localises to the cell projection. Its subcellular location is the ruffle membrane. The protein resides in the cell junction. The enzyme catalyses O-phospho-L-tyrosyl-[protein] + H2O = L-tyrosyl-[protein] + phosphate. Tyrosine phosphatase which dephosphorylates or contributes to the dephosphorylation of several substrates. Plays a role in cell adhesion, migration, proliferation and differentiation. Has a role in megakaryocytes and platelet formation. May influence the potential of nonsensory supporting cells to either proliferate or differentiate into hair cells. The sequence is that of Receptor-type tyrosine-protein phosphatase eta (PTPRJ) from Gallus gallus (Chicken).